The chain runs to 106 residues: Small ribosomal subunit protein uS10 (106 aa).

It belongs to the universal ribosomal protein uS10 family. Part of the 30S ribosomal subunit.

Involved in the binding of tRNA to the ribosomes. The polypeptide is Small ribosomal subunit protein uS10 (Synechococcus sp. (strain CC9311)).